The sequence spans 369 residues: mRNA cap guanine-N(7) methyltransferase 1 (369 aa).

Residues 1–55 (MNKRPRDEPSSSFASAPKRQYGAGGGGYGGHGYSEERSSARRVADHYSARSNQTL) form a disordered region. Gly residues predominate over residues 22–32 (GAGGGGYGGHG). Residues 33 to 48 (YSEERSSARRVADHYS) show a composition bias toward basic and acidic residues. Positions 61–340 (SPIIHLKKLN…LYLAFVLRKR (280 aa)) constitute an mRNA cap 0 methyltransferase domain. 70–71 (NN) provides a ligand contact to mRNA. S-adenosyl-L-methionine contacts are provided by residues lysine 74, alanine 92, aspartate 114, 149-150 (DC), and 171-173 (QFA).

Belongs to the class I-like SAM-binding methyltransferase superfamily. mRNA cap 0 methyltransferase family.

Its subcellular location is the nucleus. It catalyses the reaction a 5'-end (5'-triphosphoguanosine)-ribonucleoside in mRNA + S-adenosyl-L-methionine = a 5'-end (N(7)-methyl 5'-triphosphoguanosine)-ribonucleoside in mRNA + S-adenosyl-L-homocysteine. Its function is as follows. mRNA-capping methyltransferase that methylates the N7 position of the added guanosine to the 5'-cap structure of mRNAs. Binds RNA containing 5'-terminal GpppC. This is mRNA cap guanine-N(7) methyltransferase 1 from Oryza sativa subsp. japonica (Rice).